The following is a 351-amino-acid chain: Maleylacetate reductase (351 aa).

It belongs to the iron-containing alcohol dehydrogenase family. Homodimer.

The enzyme catalyses 3-oxoadipate + NAD(+) = maleylacetate + NADH + H(+). Its pathway is aromatic compound metabolism. Its function is as follows. Involved in the gamma-resorcylate (2,6-dihydroxybenzoate) catabolism. Catalyzes the reduction of maleylacetate to 3-oxoadipate. The protein is Maleylacetate reductase of Rhizobium sp. (strain MTP-10005).